The primary structure comprises 511 residues: 4,4'-diapophytoene desaturase (4,4'-diapolycopene-forming) (511 aa).

It belongs to the carotenoid/retinoid oxidoreductase family.

It carries out the reaction 15-cis-4,4'-diapophytoene + 4 FAD + 4 H(+) = all-trans-4,4'-diapolycopene + 4 FADH2. The protein operates within carotenoid biosynthesis. Functionally, involved in the biosynthesis of C30 carotenoids. Catalyzes four successive dehydrogenation reactions that lead to the introduction of four double bonds into 4,4'-diapophytoene (dehydrosqualene) to yield 4,4'-diapolycopene. The polypeptide is 4,4'-diapophytoene desaturase (4,4'-diapolycopene-forming) (Methylomonas sp).